We begin with the raw amino-acid sequence, 320 residues long: ATP-dependent 6-phosphofructokinase (320 aa).

An ATP-binding site is contributed by G12. Position 22–26 (R22–R26) interacts with ADP. ATP contacts are provided by residues R73–F74 and G103–S106. D104 is a binding site for Mg(2+). T126–D128 is a substrate binding site. D128 serves as the catalytic Proton acceptor. R155 is a binding site for ADP. Substrate is bound by residues R163 and M170–R172. Residues G186–E188, K212, and K214–H216 each bind ADP. Residues E223, R244, and H250 to R253 each bind substrate.

It belongs to the phosphofructokinase type A (PFKA) family. ATP-dependent PFK group I subfamily. Prokaryotic clade 'B1' sub-subfamily. In terms of assembly, homotetramer. Mg(2+) is required as a cofactor.

The protein localises to the cytoplasm. It carries out the reaction beta-D-fructose 6-phosphate + ATP = beta-D-fructose 1,6-bisphosphate + ADP + H(+). It participates in carbohydrate degradation; glycolysis; D-glyceraldehyde 3-phosphate and glycerone phosphate from D-glucose: step 3/4. Allosterically activated by ADP and other diphosphonucleosides, and allosterically inhibited by phosphoenolpyruvate. Catalyzes the phosphorylation of D-fructose 6-phosphate to fructose 1,6-bisphosphate by ATP, the first committing step of glycolysis. This chain is ATP-dependent 6-phosphofructokinase, found in Photobacterium profundum (strain SS9).